Reading from the N-terminus, the 676-residue chain is Lon-like protease BrxL (676 aa).

The protein belongs to the BrxL family.

Its function is as follows. BREX systems (bacteriophage exclusion) provide immunity against bacteriophage. Part of a type 1 BREX system. This system allows phage adsorption but prevents phage DNA replication, without degradation of the phage DNA. Methylation of bacterial DNA by PglX probably guides self/non-self discrimination. When the brxA-brxB-brxC-pglX and pglZ-brxL operons are transformed into a susceptible B.subtilis strain (BEST7003) they confer resistance to bacteriophages SPbeta, SP16, Zeta, phi3T and SP02 and partial protection to phages SP01 and SP82G (these include lytic and temperate phage). They do not protect against phages phi105, rho10 or rho14. Additionally confers a very slight reduction in efficiency of plasmid transformation. The sequence is that of Lon-like protease BrxL from Bacillus cereus (strain H3081.97).